Here is a 535-residue protein sequence, read N- to C-terminus: RNA-splicing ligase RtcB homolog 1 (535 aa).

Residues 1–16 (MAKSRYSRKNKGKKLQ) are compositionally biased toward basic residues. The segment at 1 to 29 (MAKSRYSRKNKGKKLQRVQENTVSTEEKS) is disordered. Positions 152, 155, 260, 292, and 383 each coordinate Mn(2+). 259–263 (NHYLE) provides a ligand contact to GMP. Residues 383 to 384 (HN), 432 to 435 (GGSM), Ser-439, 458 to 461 (HGAG), and Lys-534 contribute to the GMP site. His-458 (GMP-histidine intermediate) is an active-site residue.

It belongs to the RtcB family. In terms of assembly, catalytic component of the tRNA-splicing ligase complex. It depends on Mn(2+) as a cofactor.

The enzyme catalyses a 3'-end 3'-phospho-ribonucleotide-RNA + a 5'-end dephospho-ribonucleoside-RNA + GTP = a ribonucleotidyl-ribonucleotide-RNA + GMP + diphosphate. The catalysed reaction is a 3'-end 2',3'-cyclophospho-ribonucleotide-RNA + a 5'-end dephospho-ribonucleoside-RNA + GTP + H2O = a ribonucleotidyl-ribonucleotide-RNA + GMP + diphosphate + H(+). In terms of biological role, catalytic subunit of the tRNA-splicing ligase complex that acts by directly joining spliced tRNA halves to mature-sized tRNAs by incorporating the precursor-derived splice junction phosphate into the mature tRNA as a canonical 3',5'-phosphodiester. May act as an RNA ligase with broad substrate specificity, and may function toward other RNAs. In Entamoeba dispar (strain ATCC PRA-260 / SAW760), this protein is RNA-splicing ligase RtcB homolog 1.